Here is a 527-residue protein sequence, read N- to C-terminus: GMP synthase [glutamine-hydrolyzing] (527 aa).

Positions 19 to 212 (KIIVLDYGSQ…AFSICGAKGD (194 aa)) constitute a Glutamine amidotransferase type-1 domain. Cys-96 functions as the Nucleophile in the catalytic mechanism. Active-site residues include His-186 and Glu-188. The GMPS ATP-PPase domain occupies 213–402 (WSMANFVDMQ…LGMPDEVVWR (190 aa)). 240-246 (SGGVDSS) contacts ATP.

As to quaternary structure, homodimer.

The catalysed reaction is XMP + L-glutamine + ATP + H2O = GMP + L-glutamate + AMP + diphosphate + 2 H(+). The protein operates within purine metabolism; GMP biosynthesis; GMP from XMP (L-Gln route): step 1/1. Catalyzes the synthesis of GMP from XMP. The protein is GMP synthase [glutamine-hydrolyzing] of Streptococcus thermophilus (strain ATCC BAA-250 / LMG 18311).